The chain runs to 648 residues: Transcriptional regulator ManR (648 aa).

PRD domains follow at residues 187–292 (KFLH…YPLQ) and 297–404 (LENA…MQGS). His-222, His-281, His-334, and His-393 each carry phosphohistidine; by HPr. In terms of domain architecture, PTS EIIB type-2 spans 409-500 (KKAVIVCHMG…FIRQLGESHR (92 aa)). Cys-415 carries the post-translational modification Phosphocysteine; by EIIA. Residues 510 to 648 (NNTTPFLVFL…VMTFLSHLDY (139 aa)) enclose the PTS EIIA type-2 domain. Phosphohistidine; by EIIB is present on His-570.

It belongs to the transcriptional antiterminator BglG family.

It catalyses the reaction D-mannose(out) + N(pros)-phospho-L-histidyl-[protein] = D-mannose 6-phosphate(in) + L-histidyl-[protein]. The regulatory activity of ManR is modulated by phosphorylation and dephosphorylation of the various ManR domains. It becomes activated via phosphoryl group transfer from PEP, EI and HPr on the two conserved histidine residues in the PRD 2 domain, whereas phosphorylation of the EIIA-like domain on His-570 by the PTS EIIB-Man domain of ManP inactivates ManR. Its function is as follows. Positively regulates the expression of the mannose operon that consists of three genes, manP, manA, and yjdF, which are responsible for the transport and utilization of mannose. Also activates its own expression. This is Transcriptional regulator ManR (manR) from Bacillus subtilis (strain 168).